The sequence spans 188 residues: Large ribosomal subunit protein bL9 (188 aa).

The span at 149-170 shows a compositional bias: basic and acidic residues; that stretch reads RSEEEAERQARGEEIGVEKEEP. Residues 149 to 188 form a disordered region; sequence RSEEEAERQARGEEIGVEKEEPSGFVEEALEETVEAPAEA.

The protein belongs to the bacterial ribosomal protein bL9 family.

Binds to the 23S rRNA. The protein is Large ribosomal subunit protein bL9 of Gluconacetobacter diazotrophicus (strain ATCC 49037 / DSM 5601 / CCUG 37298 / CIP 103539 / LMG 7603 / PAl5).